Reading from the N-terminus, the 513-residue chain is Light-independent protochlorophyllide reductase subunit B (513 aa).

Residue D36 coordinates [4Fe-4S] cluster. D299 (proton donor) is an active-site residue. Position 434-435 (434-435 (GM)) interacts with substrate.

This sequence belongs to the ChlB/BchB/BchZ family. In terms of assembly, protochlorophyllide reductase is composed of three subunits; ChlL, ChlN and ChlB. Forms a heterotetramer of two ChlB and two ChlN subunits. It depends on [4Fe-4S] cluster as a cofactor.

The protein localises to the plastid. Its subcellular location is the chloroplast. The catalysed reaction is chlorophyllide a + oxidized 2[4Fe-4S]-[ferredoxin] + 2 ADP + 2 phosphate = protochlorophyllide a + reduced 2[4Fe-4S]-[ferredoxin] + 2 ATP + 2 H2O. It functions in the pathway porphyrin-containing compound metabolism; chlorophyll biosynthesis (light-independent). Its function is as follows. Component of the dark-operative protochlorophyllide reductase (DPOR) that uses Mg-ATP and reduced ferredoxin to reduce ring D of protochlorophyllide (Pchlide) to form chlorophyllide a (Chlide). This reaction is light-independent. The NB-protein (ChlN-ChlB) is the catalytic component of the complex. This Cycas taitungensis (Prince sago) protein is Light-independent protochlorophyllide reductase subunit B.